A 60-amino-acid chain; its full sequence is UPF0434 protein Spro_1718 (60 aa).

Belongs to the UPF0434 family.

This Serratia proteamaculans (strain 568) protein is UPF0434 protein Spro_1718.